We begin with the raw amino-acid sequence, 349 residues long: Ribosomal RNA small subunit methyltransferase H (349 aa).

Residues 34–36 (GGH), Asp-54, Phe-81, Asp-102, and Gln-109 contribute to the S-adenosyl-L-methionine site.

It belongs to the methyltransferase superfamily. RsmH family.

The protein resides in the cytoplasm. The catalysed reaction is cytidine(1402) in 16S rRNA + S-adenosyl-L-methionine = N(4)-methylcytidine(1402) in 16S rRNA + S-adenosyl-L-homocysteine + H(+). In terms of biological role, specifically methylates the N4 position of cytidine in position 1402 (C1402) of 16S rRNA. The protein is Ribosomal RNA small subunit methyltransferase H of Dehalococcoides mccartyi (strain ATCC BAA-2266 / KCTC 15142 / 195) (Dehalococcoides ethenogenes (strain 195)).